The following is a 104-amino-acid chain: Small ribosomal subunit protein uS10 (104 aa).

It belongs to the universal ribosomal protein uS10 family. Part of the 30S ribosomal subunit.

Its function is as follows. Involved in the binding of tRNA to the ribosomes. In Ruegeria pomeroyi (strain ATCC 700808 / DSM 15171 / DSS-3) (Silicibacter pomeroyi), this protein is Small ribosomal subunit protein uS10.